A 195-amino-acid chain; its full sequence is Putative lysine exporter (195 aa).

A run of 6 helical transmembrane segments spans residues 4-24 (LLSA…WLHF), 30-50 (LYVL…NGIS), 61-81 (LMMG…SAFF), 86-106 (ITQG…SVVL), 117-137 (IAFF…PLFM), and 170-190 (PIAI…LVFF).

Belongs to the LysO family.

The protein localises to the cell inner membrane. In terms of biological role, mediates export of lysine. This Haemophilus influenzae (strain ATCC 51907 / DSM 11121 / KW20 / Rd) protein is Putative lysine exporter.